We begin with the raw amino-acid sequence, 103 residues long: Large ribosomal subunit protein uL24 (103 aa).

This sequence belongs to the universal ribosomal protein uL24 family. In terms of assembly, part of the 50S ribosomal subunit.

One of two assembly initiator proteins, it binds directly to the 5'-end of the 23S rRNA, where it nucleates assembly of the 50S subunit. In terms of biological role, one of the proteins that surrounds the polypeptide exit tunnel on the outside of the subunit. The polypeptide is Large ribosomal subunit protein uL24 (Listeria monocytogenes serotype 4a (strain HCC23)).